We begin with the raw amino-acid sequence, 292 residues long: Tubulin beta chain (292 aa).

2 residues coordinate GTP: N49 and N71. A disordered region spans residues 265–292; sequence SEYQQYQDATAEEEGEFDEEEEGDEEAA. Acidic residues predominate over residues 274-292; sequence TAEEEGEFDEEEEGDEEAA.

The protein belongs to the tubulin family. As to quaternary structure, dimer of alpha and beta chains. A typical microtubule is a hollow water-filled tube with an outer diameter of 25 nm and an inner diameter of 15 nM. Alpha-beta heterodimers associate head-to-tail to form protofilaments running lengthwise along the microtubule wall with the beta-tubulin subunit facing the microtubule plus end conferring a structural polarity. Microtubules usually have 13 protofilaments but different protofilament numbers can be found in some organisms and specialized cells. Requires Mg(2+) as cofactor.

The protein localises to the cytoplasm. The protein resides in the cytoskeleton. In terms of biological role, tubulin is the major constituent of microtubules, a cylinder consisting of laterally associated linear protofilaments composed of alpha- and beta-tubulin heterodimers. Microtubules grow by the addition of GTP-tubulin dimers to the microtubule end, where a stabilizing cap forms. Below the cap, tubulin dimers are in GDP-bound state, owing to GTPase activity of alpha-tubulin. This Strongylocentrotus purpuratus (Purple sea urchin) protein is Tubulin beta chain.